We begin with the raw amino-acid sequence, 617 residues long: Procollagen galactosyltransferase 1 (617 aa).

The N-terminal stretch at 1–31 is a signal peptide; that stretch reads MAALPRGSRGLPLLPLLLLLPPLGGPRGADG. N-linked (GlcNAc...) asparagine glycosylation is found at Asn-91, Asn-179, and Asn-376. Residues 582-601 show a composition bias toward basic and acidic residues; that stretch reads DRAKSQKMREQQALSREAKN. Residues 582 to 617 form a disordered region; sequence DRAKSQKMREQQALSREAKNSDVLQSPLDSTARDEL. The short motif at 614–617 is the Prevents secretion from ER element; the sequence is RDEL.

It belongs to the glycosyltransferase 25 family. Post-translationally, N-glycosylated.

The protein localises to the endoplasmic reticulum lumen. The enzyme catalyses (5R)-5-hydroxy-L-lysyl-[collagen] + UDP-alpha-D-galactose = (5R)-5-O-(beta-D-galactosyl)-5-hydroxy-L-lysyl-[collagen] + UDP + H(+). In terms of biological role, beta-galactosyltransferase that transfers beta-galactose to hydroxylysine residues of type I collagen. By acting on collagen glycosylation, facilitates the formation of collagen triple helix. Also involved in the biosynthesis of collagen type IV. This Mus musculus (Mouse) protein is Procollagen galactosyltransferase 1 (Colgalt1).